Reading from the N-terminus, the 571-residue chain is Proline--tRNA ligase (571 aa).

The protein belongs to the class-II aminoacyl-tRNA synthetase family. ProS type 1 subfamily. As to quaternary structure, homodimer.

The protein resides in the cytoplasm. It catalyses the reaction tRNA(Pro) + L-proline + ATP = L-prolyl-tRNA(Pro) + AMP + diphosphate. Catalyzes the attachment of proline to tRNA(Pro) in a two-step reaction: proline is first activated by ATP to form Pro-AMP and then transferred to the acceptor end of tRNA(Pro). As ProRS can inadvertently accommodate and process non-cognate amino acids such as alanine and cysteine, to avoid such errors it has two additional distinct editing activities against alanine. One activity is designated as 'pretransfer' editing and involves the tRNA(Pro)-independent hydrolysis of activated Ala-AMP. The other activity is designated 'posttransfer' editing and involves deacylation of mischarged Ala-tRNA(Pro). The misacylated Cys-tRNA(Pro) is not edited by ProRS. This chain is Proline--tRNA ligase, found in Stutzerimonas stutzeri (strain A1501) (Pseudomonas stutzeri).